The following is a 512-amino-acid chain: Extracellular serine/threonine protein kinase CeFam20 (512 aa).

The Cytoplasmic portion of the chain corresponds to 1–6; that stretch reads MRCNIK. The chain crosses the membrane as a helical; Signal-anchor for type II membrane protein span at residues 7 to 26; it reads RLFTLAIGVFAATLVIISFS. Residues 27–512 are Lumenal-facing; it reads KDNYEREWKQ…QDKKDDKKTV (486 aa). Residues cysteine 110 and cysteine 144 are joined by a disulfide bond. Asparagine 113 carries an N-linked (GlcNAc...) asparagine glycan. Glutamine 176, lysine 192, and glutamate 213 together coordinate ATP. Position 213 (glutamate 213) interacts with Mn(2+). Asparagine 242 carries N-linked (GlcNAc...) asparagine glycosylation. Intrachain disulfides connect cysteine 268–cysteine 284 and cysteine 273–cysteine 277. 295–298 contacts ATP; sequence QVFL. 2 cysteine pairs are disulfide-bonded: cysteine 333-cysteine 409 and cysteine 410-cysteine 469. Aspartate 366 is an active-site residue. Glutamate 371 and aspartate 387 together coordinate ATP. Aspartate 387 is a Mn(2+) binding site. Residues 486–512 form a disordered region; that stretch reads PDVSDAEQNDEEQSEEHQDKKDDKKTV. Residues 489-499 are compositionally biased toward acidic residues; the sequence is SDAEQNDEEQS. Over residues 500-512 the composition is skewed to basic and acidic residues; that stretch reads EEHQDKKDDKKTV.

Belongs to the FAM20 family. Mn(2+) is required as a cofactor.

The protein resides in the golgi apparatus membrane. It is found in the secreted. The enzyme catalyses L-seryl-[protein] + ATP = O-phospho-L-seryl-[protein] + ADP + H(+). It carries out the reaction L-threonyl-[protein] + ATP = O-phospho-L-threonyl-[protein] + ADP + H(+). Its function is as follows. Golgi serine/threonine protein kinase that phosphorylates secretory pathway proteins within Ser-x-Glu/pSer motifs. This is Extracellular serine/threonine protein kinase CeFam20 from Caenorhabditis elegans.